Here is a 325-residue protein sequence, read N- to C-terminus: Syntaxin-16 (325 aa).

Residues 1-301 lie on the Cytoplasmic side of the membrane; that stretch reads MATRRLTDAF…AEQYQKKNRK (301 aa). Ser-41 carries the phosphoserine modification. A t-SNARE coiled-coil homology domain is found at 230-292; that stretch reads TLMVEERERE…EDGLKQLHKA (63 aa). The chain crosses the membrane as a helical; Anchor for type IV membrane protein span at residues 302-322; it reads MLVILILFVIIIVLIVVLVGV. Over 323–325 the chain is Vesicular; the sequence is KSR.

The protein belongs to the syntaxin family. Interacts with GCC2. Interacts with BAIAP3; this interaction is increased in the presence of calcium. Ubiquitous.

It localises to the golgi apparatus membrane. Its subcellular location is the cytoplasm. Functionally, SNARE involved in vesicular transport from the late endosomes to the trans-Golgi network. The protein is Syntaxin-16 (STX16) of Homo sapiens (Human).